Here is a 286-residue protein sequence, read N- to C-terminus: Pyridoxal kinase PdxY (286 aa).

Substrate-binding positions include Ser9 and 44-45 (TQ). ATP contacts are provided by Asp111, Glu148, and Lys181. Substrate is bound at residue Asp222.

This sequence belongs to the pyridoxine kinase family. PdxY subfamily. In terms of assembly, homodimer. Mg(2+) is required as a cofactor.

The enzyme catalyses pyridoxal + ATP = pyridoxal 5'-phosphate + ADP + H(+). The protein operates within cofactor metabolism; pyridoxal 5'-phosphate salvage; pyridoxal 5'-phosphate from pyridoxal: step 1/1. Functionally, pyridoxal kinase involved in the salvage pathway of pyridoxal 5'-phosphate (PLP). Catalyzes the phosphorylation of pyridoxal to PLP. This Actinobacillus succinogenes (strain ATCC 55618 / DSM 22257 / CCUG 43843 / 130Z) protein is Pyridoxal kinase PdxY.